Consider the following 246-residue polypeptide: Complement C1q subcomponent subunit C (246 aa).

The N-terminal stretch at 1 to 29 (MVVGPSCQPPCGLCLLLLFLLALPLRSQA) is a signal peptide. The Collagen-like domain occupies 32-113 (GCYGIPGMPG…GPPGEPGVEG (82 aa)). 4-hydroxyproline is present on residues proline 37, proline 40, proline 43, proline 46, and proline 64. Positions 44–116 (GAPGKDGHDG…GEPGVEGRYK (73 aa)) are disordered. Lysine 76 is modified (5-hydroxylysine). Lysine 76 carries an O-linked (Gal...) hydroxylysine glycan. Proline 82, proline 97, proline 100, and proline 106 each carry 4-hydroxyproline. Positions 99-108 (DPGPRGPPGE) are enriched in pro residues. One can recognise a C1q domain in the interval 116 to 246 (KQKHQSVFTV…VFSGFLLFPD (131 aa)). Cysteine 180 and cysteine 194 are oxidised to a cystine.

As to quaternary structure, core component of the complement C1 complex, a calcium-dependent complex composed of 1 molecule of the C1Q subcomplex, 2 molecules of C1R and 2 molecules of C1S. The C1Q subcomplex is composed 18 subunits: 3 chains of C1QA, C1QB, and C1QC trimerize to form 6 collagen-like triple helices connected to six globular ligand-recognition modules (C1q domain). Post-translationally, O-linked glycans consist of Glc-Gal disaccharides bound to the oxygen atom of post-translationally added hydroxyl groups.

The protein localises to the secreted. It localises to the cell surface. Its activity is regulated as follows. The C1Q subcomplex is inhibited by sulfated molecules, such as triterpenoid sulfates, heparan sulfate, or chondroitin sulfates. Core component of the complement C1 complex, a multiprotein complex that initiates the classical pathway of the complement system, a cascade of proteins that leads to phagocytosis and breakdown of pathogens and signaling that strengthens the adaptive immune system. The classical complement pathway is initiated by the C1Q subcomplex of the C1 complex, which specifically binds IgG or IgM immunoglobulins complexed with antigens, forming antigen-antibody complexes on the surface of pathogens: C1QA, together with C1QB and C1QC, specifically recognizes and binds the Fc regions of IgG or IgM via its C1q domain. Immunoglobulin-binding activates the proenzyme C1R, which cleaves C1S, initiating the proteolytic cascade of the complement system. The C1Q subcomplex is activated by a hexamer of IgG complexed with antigens, while it is activated by a pentameric IgM. The C1Q subcomplex also recognizes and binds phosphatidylserine exposed on the surface of cells undergoing programmed cell death, possibly promoting activation of the complement system. This Mus musculus (Mouse) protein is Complement C1q subcomponent subunit C.